Reading from the N-terminus, the 173-residue chain is Alpha-crystallin B chain (173 aa).

At Met1 the chain carries N-acetylmethionine. The sHSP domain occupies 54–162 (RLPSWIESGL…PERSIPITRE (109 aa)). Zn(2+) is bound by residues His81, His102, Glu104, and His109.

The protein belongs to the small heat shock protein (HSP20) family. Heteromer composed of three CRYAA and one CRYAB subunits. Aggregates with homologous proteins, including the small heat shock protein HSPB1, to form large heteromeric complexes. Inter-subunit bridging via zinc ions enhances stability, which is crucial as there is no protein turn over in the lens.

In terms of biological role, may contribute to the transparency and refractive index of the lens. This Aquarana catesbeiana (American bullfrog) protein is Alpha-crystallin B chain (CRYAB).